Reading from the N-terminus, the 349-residue chain is Signal peptidase I (349 aa).

The next 2 helical transmembrane spans lie at 3 to 23 (NLFFVILLAVGFGVWKVLDYF) and 25 to 45 (LPNTFSILLLILTALSGVLWC). The Cytoplasmic portion of the chain corresponds to 46-80 (YHRFVVLPKRHRQVARAEQRSGKTLSEEEKAKIEP). Residues 81 to 101 (ISEASEFLSSLFPVLAVVFLV) form a helical membrane-spanning segment. Residues 102–349 (RSFLFEPFQI…RFERFFTAIK (248 aa)) are Periplasmic-facing. Active-site residues include Ser115 and Lys196.

It belongs to the peptidase S26 family.

The protein resides in the cell inner membrane. The enzyme catalyses Cleavage of hydrophobic, N-terminal signal or leader sequences from secreted and periplasmic proteins.. The protein is Signal peptidase I (lepB) of Haemophilus influenzae (strain ATCC 51907 / DSM 11121 / KW20 / Rd).